The following is a 277-amino-acid chain: Carbonyl reductase [NADPH] 1 (277 aa).

Residues Val10–Val34, Asp63–Ile64, and Asn90 contribute to the NADP(+) site. Ser30 bears the Phosphoserine mark. Glutathione contacts are provided by residues Phe95–Val97 and Gln106. Residue Ser140 coordinates substrate. Residue Ala193 to Tyr194 coordinates glutathione. The active-site Proton acceptor is the Tyr194. NADP(+) contacts are provided by residues Tyr194–Lys198 and Val231–Thr233.

Belongs to the short-chain dehydrogenases/reductases (SDR) family. Monomer.

It is found in the cytoplasm. The enzyme catalyses a secondary alcohol + NADP(+) = a ketone + NADPH + H(+). It catalyses the reaction prostaglandin F2alpha + NADP(+) = prostaglandin E2 + NADPH + H(+). The catalysed reaction is prostaglandin E1 + NADP(+) = 15-oxoprostaglandin E1 + NADPH + H(+). It carries out the reaction prostaglandin D2 + NADP(+) = 15-oxoprostaglandin D2 + NADPH + H(+). The enzyme catalyses menadione + NADPH + H(+) = menadiol + NADP(+). It catalyses the reaction prostaglandin E2 + NADP(+) = 15-oxoprostaglandin E2 + NADPH + H(+). The catalysed reaction is prostaglandin F2alpha + NADP(+) = 15-oxoprostaglandin F2alpha + NADPH + H(+). It carries out the reaction daunorubicin + NADPH + H(+) = 13-dihydrodaunorubicin + NADP(+). The enzyme catalyses S-nitrosoglutathione + NADPH + H(+) = S-(hydroxysulfenamide)glutathione + NADP(+). It catalyses the reaction a primary alcohol + NADP(+) = an aldehyde + NADPH + H(+). The catalysed reaction is cortisol + NADPH + H(+) = 20beta-dihydrocortisol + NADP(+). It carries out the reaction corticosterone + NADPH + H(+) = 20beta-dihydrocorticosterone + NADP(+). Its function is as follows. NADPH-dependent reductase with broad substrate specificity. Catalyzes the reduction of a wide variety of carbonyl compounds including quinones, prostaglandins, menadione, plus various xenobiotics. Catalyzes the reduction of the antitumor anthracyclines doxorubicin and daunorubicin to the cardiotoxic compounds doxorubicinol and daunorubicinol. Can convert prostaglandin E to prostaglandin F2-alpha. Can bind glutathione, which explains its higher affinity for glutathione-conjugated substrates. Catalyzes the reduction of S-nitrosoglutathione. In addition, participates in the glucocorticoid metabolism by catalyzing the NADPH-dependent cortisol/corticosterone into 20beta-dihydrocortisol (20b-DHF) or 20beta-corticosterone (20b-DHB), which are weak agonists of NR3C1 and NR3C2 in adipose tissue. The chain is Carbonyl reductase [NADPH] 1 from Macaca fascicularis (Crab-eating macaque).